A 212-amino-acid chain; its full sequence is Pyridoxine/pyridoxamine 5'-phosphate oxidase (212 aa).

Substrate contacts are provided by residues Arg8–Tyr11 and Lys66. FMN is bound by residues Arg61–Lys66, Phe76–Thr77, Arg82, Lys83, and Gln105. Substrate-binding residues include Tyr123, Arg127, and Ser131. FMN-binding positions include Gln140–Ser141 and Trp185. Arg191–His193 is a substrate binding site. Arg195 serves as a coordination point for FMN.

This sequence belongs to the pyridoxamine 5'-phosphate oxidase family. In terms of assembly, homodimer. Requires FMN as cofactor.

It carries out the reaction pyridoxamine 5'-phosphate + O2 + H2O = pyridoxal 5'-phosphate + H2O2 + NH4(+). The catalysed reaction is pyridoxine 5'-phosphate + O2 = pyridoxal 5'-phosphate + H2O2. It participates in cofactor metabolism; pyridoxal 5'-phosphate salvage; pyridoxal 5'-phosphate from pyridoxamine 5'-phosphate: step 1/1. Its pathway is cofactor metabolism; pyridoxal 5'-phosphate salvage; pyridoxal 5'-phosphate from pyridoxine 5'-phosphate: step 1/1. In terms of biological role, catalyzes the oxidation of either pyridoxine 5'-phosphate (PNP) or pyridoxamine 5'-phosphate (PMP) into pyridoxal 5'-phosphate (PLP). This chain is Pyridoxine/pyridoxamine 5'-phosphate oxidase, found in Shewanella sp. (strain ANA-3).